The sequence spans 324 residues: Germ cell-specific gene 1 protein (324 aa).

Helical transmembrane passes span 15 to 35 (TFIS…SLLS), 127 to 147 (LSLG…LLLL), 164 to 184 (AFAA…HMLY), and 208 to 228 (WAFY…VTTF).

The protein belongs to the GSG1 family. In terms of assembly, interacts with PAPOLB. In terms of tissue distribution, expressed in spermatogenic cells (at protein level). Expressed in germ cells within the testis from day 21 onwards.

The protein localises to the endoplasmic reticulum membrane. May cause the redistribution of PAPOLB from the cytosol to the endoplasmic reticulum. This is Germ cell-specific gene 1 protein (Gsg1) from Mus musculus (Mouse).